Consider the following 207-residue polypeptide: Riboflavin synthase (207 aa).

2 Lumazine-binding repeats span residues Met1 to His94 and Ile95 to Leu191. Residues Gly4–Val6, Cys45–Thr47, Asp59–Thr64, Gly98–Val100, Lys133, Ser142–Thr144, and Asn156–Thr161 contribute to the 2,4-dihydroxypteridine site.

In terms of assembly, homotrimer.

It catalyses the reaction 2 6,7-dimethyl-8-(1-D-ribityl)lumazine + H(+) = 5-amino-6-(D-ribitylamino)uracil + riboflavin. Its pathway is cofactor biosynthesis; riboflavin biosynthesis; riboflavin from 2-hydroxy-3-oxobutyl phosphate and 5-amino-6-(D-ribitylamino)uracil: step 2/2. Catalyzes the dismutation of two molecules of 6,7-dimethyl-8-ribityllumazine, resulting in the formation of riboflavin and 5-amino-6-(D-ribitylamino)uracil. The protein is Riboflavin synthase (ribE) of Aquifex aeolicus (strain VF5).